The primary structure comprises 231 residues: Secreted LysM effector LysM13 (231 aa).

Residues 1-19 (MVFLSLKYALSGLAATAAA) form the signal peptide. N-linked (GlcNAc...) asparagine glycans are attached at residues N30, N34, N77, N100, N130, N201, and N226. Residues 38–82 (TTYTTTSEDTIFTVARKFDRGPCDIARYNRMIDAEHIFANFTLRI) enclose the LysM domain.

The protein belongs to the secreted LysM effector family.

The protein localises to the secreted. In terms of biological role, secreted LysM effector that might have a role in sequestration of chitin oligosaccharides (breakdown products of fungal cell walls that are released during invasion and act as triggers of host immunity) to dampen host defense. This is Secreted LysM effector LysM13 from Penicillium expansum (Blue mold rot fungus).